The primary structure comprises 318 residues: Acetyl-coenzyme A carboxylase carboxyl transferase subunit alpha (318 aa).

The CoA carboxyltransferase C-terminal domain occupies 31–292; that stretch reads DLTNEIEKLE…NKTITKSLHA (262 aa).

Belongs to the AccA family. In terms of assembly, acetyl-CoA carboxylase is a heterohexamer composed of biotin carboxyl carrier protein (AccB), biotin carboxylase (AccC) and two subunits each of ACCase subunit alpha (AccA) and ACCase subunit beta (AccD).

Its subcellular location is the cytoplasm. It catalyses the reaction N(6)-carboxybiotinyl-L-lysyl-[protein] + acetyl-CoA = N(6)-biotinyl-L-lysyl-[protein] + malonyl-CoA. It participates in lipid metabolism; malonyl-CoA biosynthesis; malonyl-CoA from acetyl-CoA: step 1/1. Functionally, component of the acetyl coenzyme A carboxylase (ACC) complex. First, biotin carboxylase catalyzes the carboxylation of biotin on its carrier protein (BCCP) and then the CO(2) group is transferred by the carboxyltransferase to acetyl-CoA to form malonyl-CoA. This Listeria monocytogenes serotype 4a (strain HCC23) protein is Acetyl-coenzyme A carboxylase carboxyl transferase subunit alpha.